A 97-amino-acid chain; its full sequence is Large ribosomal subunit protein bL28 (97 aa).

This sequence belongs to the bacterial ribosomal protein bL28 family.

This Rickettsia typhi (strain ATCC VR-144 / Wilmington) protein is Large ribosomal subunit protein bL28.